Here is a 514-residue protein sequence, read N- to C-terminus: Putative fumarate hydratase class I (514 aa).

C62, C187, and C274 together coordinate [4Fe-4S] cluster.

Belongs to the class-I fumarase family. As to quaternary structure, homodimer. [4Fe-4S] cluster is required as a cofactor.

It carries out the reaction (S)-malate = fumarate + H2O. Its pathway is carbohydrate metabolism; tricarboxylic acid cycle; (S)-malate from fumarate: step 1/1. In terms of biological role, catalyzes the reversible hydration of fumarate to (S)-malate. This chain is Putative fumarate hydratase class I (fumA), found in Geobacillus stearothermophilus (Bacillus stearothermophilus).